The chain runs to 583 residues: Leucine-rich repeat-containing protein 47 (583 aa).

An N-acetylalanine modification is found at A2. LRR repeat units follow at residues 76-95 (QLHS…SPEL), 100-121 (ALRV…QGLG), 130-152 (QLQS…ARCA), 154-175 (RLQS…LFRP), 180-202 (LLSE…AHLA), 203-225 (SLKT…ADCP), and 226-246 (KLKE…EKMV). Residues 260 to 300 (VGGRGGGKGKGRAEGSEKEESRRKRRERKQRREGGDGEEQD) form a disordered region. Positions 270–281 (GRAEGSEKEESR) are enriched in basic and acidic residues. Phosphoserine is present on residues S315 and S431. A coiled-coil region spans residues 402-437 (LGRKEAKAKELVRQLQLEAEEQRKQKKRQSVSGLHR). Position 509 is a phosphotyrosine (Y509). The disordered stretch occupies residues 513-544 (NKEEGSLSDTEADAVSGQLPDPTTNPSAGKDG). A phosphoserine mark is found at S518 and S520.

The protein is Leucine-rich repeat-containing protein 47 (LRRC47) of Homo sapiens (Human).